The following is a 914-amino-acid chain: UPF0182 protein PTH_1387 (914 aa).

7 consecutive transmembrane segments (helical) span residues 7–27, 48–68, 109–129, 173–193, 209–229, 252–272, and 281–301; these read FAAYVLAGFGLIFLALTIAGA, IIISDLGLRLAVGLTFFVLLF, LLLLAFIALSALMAFLFNFTV, INWVILVSAFWVLAAYFVVYF, YHFSFLAAIFFGLKAAGYQLE, TLLAYKVLTYIALLCALAILI, and LVIYSIGVLLIASVLLGGIYP.

It belongs to the UPF0182 family.

The protein resides in the cell membrane. In Pelotomaculum thermopropionicum (strain DSM 13744 / JCM 10971 / SI), this protein is UPF0182 protein PTH_1387.